We begin with the raw amino-acid sequence, 71 residues long: Large ribosomal subunit protein uL29 (71 aa).

Belongs to the universal ribosomal protein uL29 family.

The sequence is that of Large ribosomal subunit protein uL29 from Synechococcus sp. (strain RCC307).